A 271-amino-acid polypeptide reads, in one-letter code: Probable ribosome biogenesis GTPase A (271 aa).

One can recognise a CP-type G domain in the interval 21–175; the sequence is HDQLKKLASS…LSDTPGVFFK (155 aa). Residues 127-132 and glycine 171 each bind GTP; that span reads NVGKSS.

Belongs to the TRAFAC class YlqF/YawG GTPase family. MTG1 subfamily.

It localises to the cytoplasm. Its function is as follows. Required for a late step of 50S ribosomal subunit assembly. Has GTPase activity. Binds to the 23S rRNA. In Mycoplasma pneumoniae (strain ATCC 29342 / M129 / Subtype 1) (Mycoplasmoides pneumoniae), this protein is Probable ribosome biogenesis GTPase A (rbgA).